The following is a 455-amino-acid chain: MSFLMDSVIMFTSQVLFFGFGWLFFMRQLFKDYEVRQYVVQVVFSITFAFSCTMFELIIFEILGALETSSRYFHWKFNLYVILLVLIFVVPFYIGYFVVSNIRLLQRQKLLFACVVWFTFMYFFWKLGDPFPILSPKHGILSIEQLISRVGVIGVTLMALLSGFGAVNCPYTYMSYFLRNVTESDILALERRLLQTMDMIVSKKKRIAMTRRQMYQRGEDQNKQTGFWGMIKSVTSSPPGSENLSLIQQEVDALEELSRQLFLETVDLQATKERIEYSKTFQGKYFNFLGYFFSIYCVWKIFMATINIVFDRVGKTDPVTRGIEITVNYLGIQFDVKFWSQHISFILVGIIIVTSIRGLLITLTKFFYAISSSKSSNVIVLVLAQIMGMYFVSSVLLMRMSMPLEYRSIVTEVLGELQFNFYHRWFDVIFLVSALSSILFLYLAHKQAPEKHMTP.

4 consecutive transmembrane segments (helical) span residues I46–L66, L79–V99, L111–F131, and V150–P170. 2 N-linked (GlcNAc...) asparagine glycosylation sites follow: N180 and N243. A run of 4 helical transmembrane segments spans residues G290 to F310, I343 to L363, V378 to M398, and W425 to H445.

Belongs to the Golgi pH regulator (TC 1.A.38) family. As to quaternary structure, homotrimer.

It is found in the golgi apparatus membrane. The catalysed reaction is iodide(out) = iodide(in). It carries out the reaction chloride(in) = chloride(out). The enzyme catalyses bromide(in) = bromide(out). It catalyses the reaction fluoride(in) = fluoride(out). Functionally, voltage-gated channel that enables the transfer of anions such as iodide, chloride, bromide and fluoride which may function in counter-ion conductance and participates in Golgi acidification. The protein is Golgi pH regulator of Salmo salar (Atlantic salmon).